A 339-amino-acid chain; its full sequence is Dihydroorotate dehydrogenase (quinone) (339 aa).

FMN contacts are provided by residues 64 to 68 (AGADK) and threonine 88. Lysine 68 serves as a coordination point for substrate. Residue 113 to 117 (NRNGF) participates in substrate binding. Positions 141 and 174 each coordinate FMN. Asparagine 174 provides a ligand contact to substrate. The Nucleophile role is filled by serine 177. Asparagine 179 is a substrate binding site. The FMN site is built by lysine 219 and threonine 247. 248 to 249 (NT) lines the substrate pocket. FMN-binding positions include glycine 270, glycine 299, and 320–321 (YS).

Belongs to the dihydroorotate dehydrogenase family. Type 2 subfamily. As to quaternary structure, monomer. It depends on FMN as a cofactor.

Its subcellular location is the cell membrane. The enzyme catalyses (S)-dihydroorotate + a quinone = orotate + a quinol. It functions in the pathway pyrimidine metabolism; UMP biosynthesis via de novo pathway; orotate from (S)-dihydroorotate (quinone route): step 1/1. Functionally, catalyzes the conversion of dihydroorotate to orotate with quinone as electron acceptor. This Haemophilus influenzae (strain ATCC 51907 / DSM 11121 / KW20 / Rd) protein is Dihydroorotate dehydrogenase (quinone) (pyrD).